The primary structure comprises 145 residues: Major pollen allergen Ole e 1 (145 aa).

Disulfide bonds link C19/C90, C22/C131, and C43/C78. N-linked (GlcNAc...) (complex) asparagine; alternate glycosylation occurs at N111. N-linked (GlcNAc...) (high mannose) asparagine; alternate glycosylation is present at N111.

It belongs to the Ole e I family. Post-translationally, N-glycosylated; contains high mannose (Man(7)-GlcNAc) and partially fucosylated complex glycans (GlcNAc-Man(3)-Xyl-GlcNAc). Complex glycans may contribute to the antigenicity. Exists both in a glycosylated and in a non-glycosylated form. Ole e 1 and Ole e 1.0103 are the only non-glycosylated isoallergens. In terms of processing, a second potential glycosylation site exists at position 50 in cv. Bella de Espana and cv. Hojiblanca. In terms of tissue distribution, expressed in tapetum and pollen grains. Not detected in petals, roots or leaves.

It localises to the endoplasmic reticulum. The protein resides in the secreted. Functionally, may be involved in recognition between pollen-stigma and pollen tube-style cells. The sequence is that of Major pollen allergen Ole e 1 from Olea europaea (Common olive).